The primary structure comprises 754 residues: Putative sulfate transporter YPR003C (754 aa).

The segment at 1–91 (MTSNNSLLGR…NTSNTNNNDS (91 aa)) is disordered. Over 1–118 (MTSNNSLLGR…SWLPEYTFNK (118 aa)) the chain is Cytoplasmic. Basic and acidic residues predominate over residues 25–45 (RSVDQRDTFSDNFDYDKDSSN). The span at 65 to 89 (NSRSGCTNNTNNTNNTSNTSNTNNN) shows a compositional bias: low complexity. The chain crosses the membrane as a helical span at residues 119 to 139 (LWGDVIAGISVASFQIPLALS). Residues 140–146 (YTTSIAH) are Lumenal-facing. The helical transmembrane segment at 147-167 (VPPLCGLYSLAISPFVYGILG) threads the bilayer. The Cytoplasmic segment spans residues 168-172 (SVPQM). A helical membrane pass occupies residues 173-193 (IVGPESAISLVVGQAVESITL). Topologically, residues 194–199 (HKENVS) are lumenal. The helical transmembrane segment at 200 to 220 (LIDISTVITFVSGTILLFSGI) threads the bilayer. At 221–232 (SRFGFLGNVLSK) the chain is on the cytoplasmic side. A helical membrane pass occupies residues 233–253 (ALLRGFISSVGLVMIINSLIS). Residues 254-282 (ELKLDKFLVSLPQHYHTPFEKILFLIDYA) lie on the Lumenal side of the membrane. Residues 283 to 303 (PAQYHIPTAIFSGCCLIVLFL) form a helical membrane-spanning segment. Topologically, residues 304–317 (TRLLKRKLMKYHKS) are cytoplasmic. The chain crosses the membrane as a helical span at residues 318–338 (AIFFPDILLVVIVTILISMKF). Over 339-370 (NLKHRYGISIIGDFSMDNFDELKNPLTRPRRK) the chain is Lumenal. Residues 371–391 (LIPDLFSASLIVAMLGFFEST) form a helical membrane-spanning segment. At 392 to 410 (TASKSLGTTYNLTVSSNRE) the chain is on the cytoplasmic side. A helical transmembrane segment spans residues 411-431 (LVALGFMNIVISLFGALPAFG). Residues 432-450 (GYGRSKINALSGAQSVMSG) are Lumenal-facing. Residues 451 to 471 (VFMGVITLITMNLLLQFVHYI) traverse the membrane as a helical segment. The Cytoplasmic portion of the chain corresponds to 472–474 (PNC). Residues 475–495 (VLSVITTIIGISLLEEVPGDI) form a helical membrane-spanning segment. The Lumenal segment spans residues 496–517 (KFHLRCGGFSELFVFAVTFCTT). Residues 518 to 538 (IFYSIEAGICIGCVYSIINII) traverse the membrane as a helical segment. Residues 539–754 (KHSAKSRIQI…SNTLFNSSLV (216 aa)) are Cytoplasmic-facing. Residues 574–725 (DVEGTEEIEG…DSIDAALYEI (152 aa)) enclose the STAS domain.

Belongs to the SLC26A/SulP transporter (TC 2.A.53) family.

The protein localises to the endoplasmic reticulum membrane. Its function is as follows. Possible sulfate transporter. The chain is Putative sulfate transporter YPR003C from Saccharomyces cerevisiae (strain ATCC 204508 / S288c) (Baker's yeast).